The sequence spans 142 residues: Large ribosomal subunit protein uL13 (142 aa).

The protein belongs to the universal ribosomal protein uL13 family. In terms of assembly, part of the 50S ribosomal subunit.

Functionally, this protein is one of the early assembly proteins of the 50S ribosomal subunit, although it is not seen to bind rRNA by itself. It is important during the early stages of 50S assembly. This is Large ribosomal subunit protein uL13 from Shewanella amazonensis (strain ATCC BAA-1098 / SB2B).